The chain runs to 380 residues: Alcohol dehydrogenase 1 (380 aa).

Zn(2+) is bound by residues Cys48, Thr50, His70, Cys100, Cys103, Cys106, Cys114, and Cys178. Residues Thr50 and His70 each contribute to the an alcohol site. NAD(+) is bound at residue Thr50. Residues 203–208 (GLGAVG), Asp227, Arg232, Thr273, Val296, 296–298 (VGV), and Arg373 contribute to the NAD(+) site.

It belongs to the zinc-containing alcohol dehydrogenase family. Homodimer. Zn(2+) serves as cofactor.

Its subcellular location is the cytoplasm. The catalysed reaction is a primary alcohol + NAD(+) = an aldehyde + NADH + H(+). It catalyses the reaction a secondary alcohol + NAD(+) = a ketone + NADH + H(+). The protein is Alcohol dehydrogenase 1 (ADH1) of Trifolium repens (Creeping white clover).